The chain runs to 329 residues: Biotin synthase (329 aa).

Residues 46 to 275 form the Radical SAM core domain; sequence YYGNKVKLNM…TKEIRISGGR (230 aa). Residues C64, C68, and C71 each contribute to the [4Fe-4S] cluster site. Residues C108, C140, C200, and R270 each contribute to the [2Fe-2S] cluster site.

It belongs to the radical SAM superfamily. Biotin synthase family. As to quaternary structure, homodimer. Requires [4Fe-4S] cluster as cofactor. It depends on [2Fe-2S] cluster as a cofactor.

It catalyses the reaction (4R,5S)-dethiobiotin + (sulfur carrier)-SH + 2 reduced [2Fe-2S]-[ferredoxin] + 2 S-adenosyl-L-methionine = (sulfur carrier)-H + biotin + 2 5'-deoxyadenosine + 2 L-methionine + 2 oxidized [2Fe-2S]-[ferredoxin]. Its pathway is cofactor biosynthesis; biotin biosynthesis; biotin from 7,8-diaminononanoate: step 2/2. In terms of biological role, catalyzes the conversion of dethiobiotin (DTB) to biotin by the insertion of a sulfur atom into dethiobiotin via a radical-based mechanism. This Anoxybacillus flavithermus (strain DSM 21510 / WK1) protein is Biotin synthase.